We begin with the raw amino-acid sequence, 465 residues long: Asparagine--tRNA ligase (465 aa).

It belongs to the class-II aminoacyl-tRNA synthetase family. As to quaternary structure, homodimer.

Its subcellular location is the cytoplasm. It carries out the reaction tRNA(Asn) + L-asparagine + ATP = L-asparaginyl-tRNA(Asn) + AMP + diphosphate + H(+). The sequence is that of Asparagine--tRNA ligase from Clostridium perfringens (strain ATCC 13124 / DSM 756 / JCM 1290 / NCIMB 6125 / NCTC 8237 / Type A).